Reading from the N-terminus, the 236-residue chain is Hydroxyacylglutathione hydrolase (236 aa).

7 residues coordinate Zn(2+): His-52, His-54, Asp-56, His-57, His-108, Asp-125, and His-163.

It belongs to the metallo-beta-lactamase superfamily. Glyoxalase II family. Monomer. Zn(2+) serves as cofactor.

The catalysed reaction is an S-(2-hydroxyacyl)glutathione + H2O = a 2-hydroxy carboxylate + glutathione + H(+). Its pathway is secondary metabolite metabolism; methylglyoxal degradation; (R)-lactate from methylglyoxal: step 2/2. In terms of biological role, thiolesterase that catalyzes the hydrolysis of S-D-lactoyl-glutathione to form glutathione and D-lactic acid. This Mannheimia succiniciproducens (strain KCTC 0769BP / MBEL55E) protein is Hydroxyacylglutathione hydrolase.